The primary structure comprises 177 residues: ATP synthase subunit delta (177 aa).

It belongs to the ATPase delta chain family. In terms of assembly, F-type ATPases have 2 components, F(1) - the catalytic core - and F(0) - the membrane proton channel. F(1) has five subunits: alpha(3), beta(3), gamma(1), delta(1), epsilon(1). F(0) has three main subunits: a(1), b(2) and c(10-14). The alpha and beta chains form an alternating ring which encloses part of the gamma chain. F(1) is attached to F(0) by a central stalk formed by the gamma and epsilon chains, while a peripheral stalk is formed by the delta and b chains.

The protein localises to the cell inner membrane. In terms of biological role, f(1)F(0) ATP synthase produces ATP from ADP in the presence of a proton or sodium gradient. F-type ATPases consist of two structural domains, F(1) containing the extramembraneous catalytic core and F(0) containing the membrane proton channel, linked together by a central stalk and a peripheral stalk. During catalysis, ATP synthesis in the catalytic domain of F(1) is coupled via a rotary mechanism of the central stalk subunits to proton translocation. Functionally, this protein is part of the stalk that links CF(0) to CF(1). It either transmits conformational changes from CF(0) to CF(1) or is implicated in proton conduction. In Neisseria gonorrhoeae (strain ATCC 700825 / FA 1090), this protein is ATP synthase subunit delta.